A 140-amino-acid polypeptide reads, in one-letter code: Oocyte zinc finger protein XlCOF15 (140 aa).

C2H2-type zinc fingers lie at residues 6-28 (FTCKECSKSFSSNSHLSRHQKIH), 34-56 (FTCTECDKKFLTRSSLLLHQKVH), 62-84 (FICTECGKGFSAKSQLHRHHVIH), 90-112 (FTCAECGKTFSYKQSLVTHRAAH), and 118-140 (FICTECGKSFSHKNNLQTHLKSH).

The protein belongs to the krueppel C2H2-type zinc-finger protein family.

It localises to the nucleus. In terms of biological role, may be involved in transcriptional regulation. The sequence is that of Oocyte zinc finger protein XlCOF15 from Xenopus laevis (African clawed frog).